Reading from the N-terminus, the 524-residue chain is Glutamyl-tRNA(Gln) amidotransferase subunit A, mitochondrial (524 aa).

Catalysis depends on charge relay system residues Lys-76 and Ser-171. The Acyl-ester intermediate role is filled by Ser-195.

Belongs to the amidase family. GatA subfamily. As to quaternary structure, subunit of the heterotrimeric GatCAB amidotransferase (AdT) complex, composed of A (qrsl1), B (gatb) and C (gatc) subunits.

It is found in the mitochondrion. The enzyme catalyses L-glutamyl-tRNA(Gln) + L-glutamine + ATP + H2O = L-glutaminyl-tRNA(Gln) + L-glutamate + ADP + phosphate + H(+). Its function is as follows. Allows the formation of correctly charged Gln-tRNA(Gln) through the transamidation of misacylated Glu-tRNA(Gln) in the mitochondria. The reaction takes place in the presence of glutamine and ATP through an activated gamma-phospho-Glu-tRNA(Gln). This chain is Glutamyl-tRNA(Gln) amidotransferase subunit A, mitochondrial (qrsl1), found in Xenopus tropicalis (Western clawed frog).